Consider the following 540-residue polypeptide: uncharacterized protein (540 aa).

A chloroplast-targeting transit peptide spans Met1–Leu58. The region spanning Tyr195–Asn533 is the Protein kinase domain. Residues Ile201–Val209 and Lys224 each bind ATP. Asp362 functions as the Proton acceptor in the catalytic mechanism.

The protein belongs to the protein kinase superfamily. ADCK protein kinase family.

It is found in the plastid. It localises to the chloroplast. Its subcellular location is the plastoglobule. This is an uncharacterized protein from Arabidopsis thaliana (Mouse-ear cress).